Consider the following 672-residue polypeptide: Leucine-rich repeat receptor-like protein kinase PXC1 (672 aa).

Residues 1–21 (MAAKPLLLPLLLLLHLSITLA) form the signal peptide. Topologically, residues 22-269 (QNDTNALTLF…IHSHRGIKPG (248 aa)) are extracellular. Asparagine 23, asparagine 44, and asparagine 101 each carry an N-linked (GlcNAc...) asparagine glycan. An LRR 1 repeat occupies 87–110 (LDQLRLLDLHDNRLNGTVSPLTNC). A Glycyl lysine isopeptide (Lys-Gly) (interchain with G-Cter in ubiquitin) cross-link involves residue lysine 111. LRR repeat units lie at residues 112–134 (NLRL…ISFL), 135–158 (KRMI…ILGF), 160–181 (RVLT…FSQM), and 182–205 (KSLL…VVKK). 2 N-linked (GlcNAc...) asparagine glycosylation sites follow: asparagine 188 and asparagine 197. The span at 233 to 249 (ESSNTDQIVPSNPTSIP) shows a compositional bias: polar residues. Positions 233–254 (ESSNTDQIVPSNPTSIPHSPVS) are disordered. Residues 270–290 (IIAAVIGGCVAVIVLVSFGFA) traverse the membrane as a helical segment. Over 291–672 (FCCGRLDRNG…MSPSLATTDG (382 aa)) the chain is Cytoplasmic. Residues 300–333 (GERSKSGSVETGFVGGGEGKRRSSYGEGGESDAT) form a disordered region. One can recognise a Protein kinase domain in the interval 357–645 (KASAEMLGKG…AEVVKMVEEI (289 aa)). Residues 363 to 371 (LGKGSLGTV) and lysine 386 contribute to the ATP site. The segment at 650–672 (SPVGEDFDESRNSMSPSLATTDG) is disordered. Residues 661–672 (NSMSPSLATTDG) are compositionally biased toward polar residues.

Belongs to the protein kinase superfamily. Ser/Thr protein kinase family. Expressed in the vascular strands of cotyledons, the shoot apex, hypocotyls, roots, leaves, stems and flowers.

It localises to the cell membrane. Functionally, leucine-rich repeat receptor-like protein kinase involved in secondary cell wall formation in xylem fibers. May play a role in a regulatory network which also incorporates the TDR/PXY signaling pathway and regulates the maturation of interfascicular fiber cells. May promote the initiation of secondary cell wall deposition during the procedure of cell expansion. The polypeptide is Leucine-rich repeat receptor-like protein kinase PXC1 (Arabidopsis thaliana (Mouse-ear cress)).